The chain runs to 587 residues: Capsid vertex component 2 (587 aa).

The interaction with major capsid protein/MCP stretch occupies residues 1–53; the sequence is MAEYVNYVLGSLYVSDTATSTIPTDVRNFIAPPFPLNFWSGPTFTVRSNTRAD. Residues 113–132 are disordered; sequence SADAATPQVNASEADQRPDN.

It belongs to the herpesviridae CVC2 protein family. Heterodimerizes with CVC1. Interacts with major capsid protein/MCP and triplex capsid protein 1/TRX1 at the pentamer vertices. Interacts with the large tegument protein/LTP.

It localises to the virion. Its subcellular location is the host nucleus. In terms of biological role, capsid vertex-specific component that plays a role during viral DNA encapsidation, assuring correct genome cleavage and presumably stabilizing capsids that contain full-length viral genomes. Participates in the interaction between the capsid and the tegument through interaction with the large tegument protein/LTP. The protein is Capsid vertex component 2 of Equine herpesvirus 1 (strain V592) (EHV-1).